The chain runs to 367 residues: Viral cathepsin (367 aa).

Positions Met1 to Cys25 are cleaved as a signal peptide. A propeptide spans Asp26–Leu156 (activation peptide). Asn103 and Asn135 each carry an N-linked (GlcNAc...) asparagine; by host glycan. Intrachain disulfides connect Cys177–Cys218, Cys211–Cys251, and Cys306–Cys354. The active site involves Cys180. Residues His313 and Asn333 contribute to the active site.

The protein belongs to the peptidase C1 family. Synthesized as an inactive proenzyme and activated by proteolytic removal of the inhibitory propeptide.

It catalyses the reaction Endopeptidase of broad specificity, hydrolyzing substrates of both cathepsin L and cathepsin B.. Its function is as follows. Cysteine protease that plays an essential role in host liquefaction to facilitate horizontal transmission of the virus. May participate in the degradation of foreign protein expressed by the baculovirus system. The sequence is that of Viral cathepsin (VCATH) from Lepidoptera (butterflies and moths).